Here is a 2496-residue protein sequence, read N- to C-terminus: Hornerin (2496 aa).

An S-100-like region spans residues 1 to 81; the sequence is MPKLLESIVT…TEYLLMILKL (81 aa). EF-hand domains are found at residues 13–48 and 49–84; these read DVFY…LKNP and DDPD…LTKA. Residues M27, E32, D62, D64, N66, K68, and E73 each contribute to the Ca(2+) site. The interval 82-98 is s (spacer); the sequence is TKACNKIIGKDYCQASG. Positions 97-2496 are disordered; it reads SGSKQKNHSH…SGQTSGCGSG (2400 aa). The 1; truncated repeat unit spans residues 99 to 145; sequence SKQKNHSHQHQEEQSKKETENKEQKGSISSSAGENDSYSRGSRGSNK. Over residues 107–123 the composition is skewed to basic and acidic residues; sequence QHQEEQSKKETENKEQK. The span at 124–134 shows a compositional bias: polar residues; sequence GSISSSAGEND. Basic residues predominate over residues 144–153; it reads NKSKSKKLRK. 27 repeat units span residues 146–231, 232–321, 326–400, 401–491, 492–577, 578–668, 669–748, 749–839, 840–926, 927–1017, 1018–1097, 1098–1188, 1189–1274, 1275–1365, 1366–1445, 1446–1536, 1537–1622, 1623–1713, 1714–1793, 1794–1884, 1885–1970, 1971–2061, 2062–2141, 2142–2232, 2233–2312, 2313–2403, and 2410–2496. 3 stretches are compositionally biased toward low complexity: residues 183-194, 200-246, and 270-286; these read SGFSNSSGNGRP, SGFP…SGHS, and RESS…SEEP. Composition is skewed to polar residues over residues 294 to 319 and 326 to 355; these read RKNS…QGFG and SGQS…SSES. Composition is skewed to low complexity over residues 362-379, 394-415, and 423-448; these read VSGS…STSG, SSGS…SGQS, and SGSR…QQFG. Positions 449-464 are enriched in gly residues; that stretch reads SGSGRSSGFSQGGSGQ. The span at 465 to 565 shows a compositional bias: low complexity; it reads GRSSRGGQQG…GQTSSSTRQG (101 aa). Phosphoserine occurs at positions 506 and 508. Gly residues predominate over residues 566-576; sequence SGQGQASGSGR. Composition is skewed to low complexity over residues 577–593 and 600–625; these read YGAS…GQST and SGSR…QRYG. A compositionally biased stretch (gly residues) spans 626-641; that stretch reads SGSGESSGFSQGGSGQ. Low complexity-rich tracts occupy residues 642 to 670 and 679 to 713; these read GRSS…SRHG and SGQQ…GSGS. R646 bears the Omega-N-methylarginine mark. S716 bears the Phosphoserine mark. Low complexity predominate over residues 723 to 736; the sequence is GSTSGQTASSTRQG. Gly residues predominate over residues 737–747; that stretch reads SGQGQASGSGR. Low complexity-rich tracts occupy residues 748-764, 771-796, 804-884, and 891-914; these read CGAS…GQST, SGSR…QRFG, GFSQ…SRPA, and SGRS…TRQG. Phosphoserine is present on S815. Positions 915–925 are enriched in gly residues; it reads SGQGQASGSGR. Low complexity-rich tracts occupy residues 926-942 and 949-974; these read YGAS…GQST and SGSR…QRYG. A compositionally biased stretch (gly residues) spans 975-990; sequence SGSGESSGFSQGGSGQ. Composition is skewed to low complexity over residues 991–1019, 1028–1062, and 1072–1085; these read GRSS…SRHG, SGQQ…GSGS, and GSTS…TRQG. R995 carries the omega-N-methylarginine modification. A compositionally biased stretch (gly residues) spans 1086–1096; that stretch reads SGQGQASGSGR. Composition is skewed to low complexity over residues 1097-1113, 1120-1145, and 1153-1262; these read CGAS…GQST, SGSR…QRFG, and GFSQ…TRQG. S1229 carries the phosphoserine modification. Residues 1263 to 1273 are compositionally biased toward gly residues; it reads SGQGQASGSGR. Residues 1281 to 1292 show a composition bias toward polar residues; it reads TSGCRSGQSTRY. Over residues 1298–1322 the composition is skewed to low complexity; it reads GSRNSSTQSRGRSTSRESSTSQRYG. Over residues 1323 to 1338 the composition is skewed to gly residues; that stretch reads SGSGESSGFSQGGSGQ. Low complexity-rich tracts occupy residues 1339–1367, 1376–1410, and 1420–1433; these read GRSS…SRHG, SGQQ…GSGS, and GSTS…TRQG. Position 1343 is an omega-N-methylarginine (R1343). The span at 1434–1444 shows a compositional bias: gly residues; it reads SGQGQASGSGR. Low complexity-rich tracts occupy residues 1445 to 1461, 1468 to 1493, and 1501 to 1610; these read CGAS…GQST, SGSR…QRFG, and GFSQ…TRQG. Residues S1551 and S1553 each carry the phosphoserine modification. Gly residues predominate over residues 1611 to 1621; that stretch reads SGQGQASGSGR. 2 stretches are compositionally biased toward low complexity: residues 1622-1631 and 1645-1670; these read YGASSGQTSG and SGSR…QRCG. S1650 bears the Phosphoserine mark. The span at 1671-1686 shows a compositional bias: gly residues; sequence SGSGESSGFSQGGSGQ. Low complexity-rich tracts occupy residues 1687–1715, 1724–1758, and 1768–1781; these read GRSS…SRHG, SGQQ…GSGS, and GSTS…TRQG. Position 1691 is an omega-N-methylarginine (R1691). Gly residues predominate over residues 1782–1792; it reads SGQGQASGSGR. Positions 1800–1811 are enriched in polar residues; the sequence is TSGCGSDQSTRY. Composition is skewed to low complexity over residues 1816 to 1841 and 1849 to 1958; these read SGSR…QRFG and GFSQ…TRQG. Over residues 1959–1969 the composition is skewed to gly residues; the sequence is SGQGQASGSGR. Composition is skewed to low complexity over residues 1970–1986 and 1993–2018; these read YGAS…GQST and SGSR…QRYG. S2011 carries the phosphoserine modification. Residues 2019 to 2034 show a composition bias toward gly residues; that stretch reads SGSGESSGFSQGGSGQ. Low complexity-rich tracts occupy residues 2035 to 2063 and 2072 to 2106; these read GRSS…SRHG and SGQQ…GSGS. Residue R2039 is modified to Omega-N-methylarginine. Phosphoserine is present on residues S2109 and S2124. Over residues 2116–2129 the composition is skewed to low complexity; it reads GSTSGQTASSTRQG. The span at 2130 to 2140 shows a compositional bias: gly residues; it reads SGQGQASGSGR. Low complexity-rich tracts occupy residues 2141 to 2157 and 2164 to 2189; these read CGAS…GQST and SGSR…QRYG. Residues 2190–2205 show a composition bias toward gly residues; that stretch reads SGSGESSGFSQGGSGQ. Composition is skewed to low complexity over residues 2206 to 2234 and 2243 to 2300; these read GRSS…SRHG and SGQQ…TRQG. R2210 is subject to Omega-N-methylarginine. Residues 2301 to 2311 show a composition bias toward gly residues; it reads SGQGQASGSGR. Low complexity-rich tracts occupy residues 2312 to 2328 and 2335 to 2360; these read YGAS…GQST and SGSR…QRYG. S2353 carries the phosphoserine modification. A compositionally biased stretch (gly residues) spans 2361-2376; that stretch reads SGSGESSGFSQGGSGQ. 3 stretches are compositionally biased toward low complexity: residues 2377–2405, 2414–2448, and 2458–2471; these read GRSS…SRHG, SGQQ…GSGS, and GSTS…TRQG. R2381 is modified (omega-N-methylarginine). Residues 2472–2482 show a composition bias toward gly residues; it reads SGQGQASGSGR.

Belongs to the S100-fused protein family. The protein in the N-terminal section; belongs to the S-100 family. Post-translationally, processed during the process of epidermal differentiation. Forms covalent cross-links mediated by transglutaminase TGM3, between glutamine and the epsilon-amino group of lysine residues (in vitro). Embryonic skin. Highest level in the adult forestomach followed by the skin. Lower levels in the tongue, esophagus. Detected in the granular and cornified layers of the mature epidermis.

It is found in the cytoplasmic granule. In terms of biological role, component of the epidermal cornified cell envelopes. In Mus musculus (Mouse), this protein is Hornerin (Hrnr).